The sequence spans 225 residues: Chromosome partition protein MukE (225 aa).

The interval 197–225 is disordered; it reads RDGEAMPIENHLQLNDETEENQPDSGEEE. The segment covering 212 to 225 has biased composition (acidic residues); that stretch reads DETEENQPDSGEEE.

This sequence belongs to the MukE family. In terms of assembly, interacts, and probably forms a ternary complex, with MukF and MukB. The complex formation is stimulated by calcium or magnesium.

It is found in the cytoplasm. The protein localises to the nucleoid. Its function is as follows. Involved in chromosome condensation, segregation and cell cycle progression. May participate in facilitating chromosome segregation by condensation DNA from both sides of a centrally located replisome during cell division. Probably acts via its interaction with MukB and MukF. The protein is Chromosome partition protein MukE of Escherichia coli O157:H7.